An 854-amino-acid chain; its full sequence is Rod cGMP-specific 3',5'-cyclic phosphodiesterase subunit beta (854 aa).

Ser-2 carries the post-translational modification N-acetylserine. 2 consecutive GAF domains span residues 71-220 and 252-429; these read NMER…TLYL and DIER…GWSV. The PDEase domain occupies 481–814; that stretch reads DEDELGEILK…KEWKALADEY (334 aa). His-557 functions as the Proton donor in the catalytic mechanism. His-561, His-597, Asp-598, and Asp-718 together coordinate a divalent metal cation. Residue Cys-851 is the site of S-geranylgeranyl cysteine attachment. A propeptide spans 852 to 854 (removed in mature form); sequence CIL.

Belongs to the cyclic nucleotide phosphodiesterase family. As to quaternary structure, oligomer composed of two catalytic chains (alpha and beta), an inhibitory chain (gamma) and the delta chain. A divalent metal cation serves as cofactor.

Its subcellular location is the membrane. It is found in the cell projection. It localises to the cilium. The protein resides in the photoreceptor outer segment. The catalysed reaction is 3',5'-cyclic GMP + H2O = GMP + H(+). Rod-specific cGMP phosphodiesterase that catalyzes the hydrolysis of 3',5'-cyclic GMP. Necessary for the formation of a functional phosphodiesterase holoenzyme. Involved in retinal circadian rhythm photoentrainment via modulation of UVA and orange light-induced phase-shift of the retina clock. May participate in processes of transmission and amplification of the visual signal. This is Rod cGMP-specific 3',5'-cyclic phosphodiesterase subunit beta from Homo sapiens (Human).